Here is a 128-residue protein sequence, read N- to C-terminus: Large ribosomal subunit protein eL32 (128 aa).

This sequence belongs to the eukaryotic ribosomal protein eL32 family.

The sequence is that of Large ribosomal subunit protein eL32 (rpl32e) from Thermoplasma volcanium (strain ATCC 51530 / DSM 4299 / JCM 9571 / NBRC 15438 / GSS1).